The sequence spans 485 residues: Cobyric acid synthase (485 aa).

One can recognise a GATase cobBQ-type domain in the interval 252-439 (KVRIAVPILP…VHGLFGDDRQ (188 aa)). Catalysis depends on C334, which acts as the Nucleophile. H431 is a catalytic residue.

This sequence belongs to the CobB/CobQ family. CobQ subfamily.

Its pathway is cofactor biosynthesis; adenosylcobalamin biosynthesis. Its function is as follows. Catalyzes amidations at positions B, D, E, and G on adenosylcobyrinic A,C-diamide. NH(2) groups are provided by glutamine, and one molecule of ATP is hydrogenolyzed for each amidation. In Azorhizobium caulinodans (strain ATCC 43989 / DSM 5975 / JCM 20966 / LMG 6465 / NBRC 14845 / NCIMB 13405 / ORS 571), this protein is Cobyric acid synthase.